Consider the following 364-residue polypeptide: Dihydroorotate dehydrogenase (quinone) (364 aa).

Residues 62–66 (AGFDK) and threonine 86 each bind FMN. A substrate-binding site is contributed by lysine 66. 111-115 (NRMGF) serves as a coordination point for substrate. The FMN site is built by asparagine 142 and asparagine 175. Asparagine 175 is a binding site for substrate. Residue serine 178 is the Nucleophile of the active site. Asparagine 180 provides a ligand contact to substrate. FMN is bound by residues lysine 216 and threonine 244. 245–246 (NT) lines the substrate pocket. Residues glycine 267, glycine 296, and 317 to 318 (YT) each bind FMN.

The protein belongs to the dihydroorotate dehydrogenase family. Type 2 subfamily. In terms of assembly, monomer. Requires FMN as cofactor.

Its subcellular location is the cell membrane. The enzyme catalyses (S)-dihydroorotate + a quinone = orotate + a quinol. It functions in the pathway pyrimidine metabolism; UMP biosynthesis via de novo pathway; orotate from (S)-dihydroorotate (quinone route): step 1/1. In terms of biological role, catalyzes the conversion of dihydroorotate to orotate with quinone as electron acceptor. The polypeptide is Dihydroorotate dehydrogenase (quinone) (Anaeromyxobacter dehalogenans (strain 2CP-1 / ATCC BAA-258)).